The sequence spans 296 residues: MTKTALLKLFVAIVITFILILPEYFKTPKERTLELSCLEVCLQSNFTYSLSSLNFSFVTFLQPVRETQIIMRIFLNPSNFRNFTRTCQDITGEFKMCSSCLVCESKGNMDFISQEQTSKVLIRRGSMEVKANDFHSPCQHFNFSVAPLVDHLEEYNTTCHLKNHTGRSTIMEDEPSKEKSINYTCRIMEYPNDCIHISLHLEMDIKNITCSMKITWYILVLLVFIFLIILTIRKILEGQRRVQKWQSHRDKPTSVLLRGSDSEKLRALNVQVLSAETTQRLPLDQVQEVLPPIPEL.

The Cytoplasmic segment spans residues 1-4; sequence MTKT. Residues 5-25 traverse the membrane as a helical segment; it reads ALLKLFVAIVITFILILPEYF. Residues 26–211 are Extracellular-facing; it reads KTPKERTLEL…EMDIKNITCS (186 aa). N-linked (GlcNAc...) asparagine glycosylation is found at asparagine 45 and asparagine 156. Residues 212 to 232 traverse the membrane as a helical segment; it reads MKITWYILVLLVFIFLIILTI. The Cytoplasmic portion of the chain corresponds to 233–296; the sequence is RKILEGQRRV…QEVLPPIPEL (64 aa).

The protein localises to the membrane. In Homo sapiens (Human), this protein is Transmembrane protein 156 (TMEM156).